A 109-amino-acid chain; its full sequence is U4-lycotoxin-Ls1c (109 aa).

The N-terminal stretch at 1–22 (MKVLVLFSVLFLTLFSYSSTEA) is a signal peptide. A propeptide spanning residues 23–44 (IDEFDSDAEDDMLSLMANEQVR) is cleaved from the precursor. The segment at 45–88 (AKACTPRLHDCSHDRHSCCRGELFKDVCYCFYPEGEDITEVCSC) is knottin domain. 4 cysteine pairs are disulfide-bonded: cysteine 48-cysteine 63, cysteine 55-cysteine 72, cysteine 62-cysteine 88, and cysteine 74-cysteine 86. Positions 89–108 (QQPKSHKYIEKVVDKAKTVV) are linear cationic cytotoxin domain.

The protein belongs to the neurotoxin 19 (CSTX) family. 05 (U4-Lctx) subfamily. Expressed by the venom gland.

The protein resides in the secreted. Functionally, enhances the high-affinity desensitization of human P2RX3 purinoceptors. The polypeptide is U4-lycotoxin-Ls1c (Lycosa singoriensis (Wolf spider)).